The sequence spans 546 residues: Chaperonin GroEL (546 aa).

ATP is bound by residues 29–32 (TLGP), Lys50, 86–90 (DGTTT), Gly414, 477–479 (NAA), and Asp493.

This sequence belongs to the chaperonin (HSP60) family. Forms a cylinder of 14 subunits composed of two heptameric rings stacked back-to-back. Interacts with the co-chaperonin GroES.

The protein localises to the cytoplasm. It carries out the reaction ATP + H2O + a folded polypeptide = ADP + phosphate + an unfolded polypeptide.. Together with its co-chaperonin GroES, plays an essential role in assisting protein folding. The GroEL-GroES system forms a nano-cage that allows encapsulation of the non-native substrate proteins and provides a physical environment optimized to promote and accelerate protein folding. This is Chaperonin GroEL from Geobacter metallireducens (strain ATCC 53774 / DSM 7210 / GS-15).